The primary structure comprises 271 residues: 4-hydroxy-tetrahydrodipicolinate reductase (271 aa).

Residues 10–15 (GAGGRM), E36, 100–102 (GTT), and 124–127 (SGNM) contribute to the NAD(+) site. The active-site Proton donor/acceptor is H157. H158 is a (S)-2,3,4,5-tetrahydrodipicolinate binding site. The Proton donor role is filled by K161. 167–168 (GT) is a (S)-2,3,4,5-tetrahydrodipicolinate binding site.

Belongs to the DapB family.

Its subcellular location is the cytoplasm. The catalysed reaction is (S)-2,3,4,5-tetrahydrodipicolinate + NAD(+) + H2O = (2S,4S)-4-hydroxy-2,3,4,5-tetrahydrodipicolinate + NADH + H(+). The enzyme catalyses (S)-2,3,4,5-tetrahydrodipicolinate + NADP(+) + H2O = (2S,4S)-4-hydroxy-2,3,4,5-tetrahydrodipicolinate + NADPH + H(+). The protein operates within amino-acid biosynthesis; L-lysine biosynthesis via DAP pathway; (S)-tetrahydrodipicolinate from L-aspartate: step 4/4. Catalyzes the conversion of 4-hydroxy-tetrahydrodipicolinate (HTPA) to tetrahydrodipicolinate. The sequence is that of 4-hydroxy-tetrahydrodipicolinate reductase from Bradyrhizobium diazoefficiens (strain JCM 10833 / BCRC 13528 / IAM 13628 / NBRC 14792 / USDA 110).